Here is a 297-residue protein sequence, read N- to C-terminus: Lipoyl synthase (297 aa).

Residues C37, C42, C48, C63, C67, C70, and S276 each contribute to the [4Fe-4S] cluster site. The 217-residue stretch at 49 to 265 (WSRKHATVMI…ERIAKTKGFL (217 aa)) folds into the Radical SAM core domain.

Belongs to the radical SAM superfamily. Lipoyl synthase family. It depends on [4Fe-4S] cluster as a cofactor.

The protein localises to the cytoplasm. It catalyses the reaction [[Fe-S] cluster scaffold protein carrying a second [4Fe-4S](2+) cluster] + N(6)-octanoyl-L-lysyl-[protein] + 2 oxidized [2Fe-2S]-[ferredoxin] + 2 S-adenosyl-L-methionine + 4 H(+) = [[Fe-S] cluster scaffold protein] + N(6)-[(R)-dihydrolipoyl]-L-lysyl-[protein] + 4 Fe(3+) + 2 hydrogen sulfide + 2 5'-deoxyadenosine + 2 L-methionine + 2 reduced [2Fe-2S]-[ferredoxin]. It functions in the pathway protein modification; protein lipoylation via endogenous pathway; protein N(6)-(lipoyl)lysine from octanoyl-[acyl-carrier-protein]: step 2/2. Functionally, catalyzes the radical-mediated insertion of two sulfur atoms into the C-6 and C-8 positions of the octanoyl moiety bound to the lipoyl domains of lipoate-dependent enzymes, thereby converting the octanoylated domains into lipoylated derivatives. This chain is Lipoyl synthase, found in Rickettsia typhi (strain ATCC VR-144 / Wilmington).